Consider the following 316-residue polypeptide: 4-hydroxy-3-methylbut-2-enyl diphosphate reductase (316 aa).

C12 provides a ligand contact to [4Fe-4S] cluster. Residues H41 and H74 each coordinate (2E)-4-hydroxy-3-methylbut-2-enyl diphosphate. Dimethylallyl diphosphate contacts are provided by H41 and H74. 2 residues coordinate isopentenyl diphosphate: H41 and H74. Position 96 (C96) interacts with [4Fe-4S] cluster. H124 lines the (2E)-4-hydroxy-3-methylbut-2-enyl diphosphate pocket. H124 contacts dimethylallyl diphosphate. H124 is a binding site for isopentenyl diphosphate. E126 functions as the Proton donor in the catalytic mechanism. T167 provides a ligand contact to (2E)-4-hydroxy-3-methylbut-2-enyl diphosphate. C197 contacts [4Fe-4S] cluster. S225, S226, N227, and S269 together coordinate (2E)-4-hydroxy-3-methylbut-2-enyl diphosphate. Residues S225, S226, N227, and S269 each coordinate dimethylallyl diphosphate. Residues S225, S226, N227, and S269 each coordinate isopentenyl diphosphate.

It belongs to the IspH family. As to quaternary structure, homodimer. It depends on [4Fe-4S] cluster as a cofactor.

It catalyses the reaction isopentenyl diphosphate + 2 oxidized [2Fe-2S]-[ferredoxin] + H2O = (2E)-4-hydroxy-3-methylbut-2-enyl diphosphate + 2 reduced [2Fe-2S]-[ferredoxin] + 2 H(+). The catalysed reaction is dimethylallyl diphosphate + 2 oxidized [2Fe-2S]-[ferredoxin] + H2O = (2E)-4-hydroxy-3-methylbut-2-enyl diphosphate + 2 reduced [2Fe-2S]-[ferredoxin] + 2 H(+). Its pathway is isoprenoid biosynthesis; dimethylallyl diphosphate biosynthesis; dimethylallyl diphosphate from (2E)-4-hydroxy-3-methylbutenyl diphosphate: step 1/1. The protein operates within isoprenoid biosynthesis; isopentenyl diphosphate biosynthesis via DXP pathway; isopentenyl diphosphate from 1-deoxy-D-xylulose 5-phosphate: step 6/6. Its function is as follows. Catalyzes the conversion of 1-hydroxy-2-methyl-2-(E)-butenyl 4-diphosphate (HMBPP) into a mixture of isopentenyl diphosphate (IPP) and dimethylallyl diphosphate (DMAPP). Acts in the terminal step of the DOXP/MEP pathway for isoprenoid precursor biosynthesis. The sequence is that of 4-hydroxy-3-methylbut-2-enyl diphosphate reductase from Escherichia coli (strain ATCC 8739 / DSM 1576 / NBRC 3972 / NCIMB 8545 / WDCM 00012 / Crooks).